A 388-amino-acid chain; its full sequence is MSYQPTPEDRFTFGLWTVGWQGRDPFGDATRRALDPVETVQRLAELGAHGVTFHDDDLIPFGSSDTERESHIKRFRQALDATGMTVPMATTNLFTHPVFKDGAFTANDRDVRRYALRKTIRNIDLAAELGAKTYVAWGGREGAESGAAKDVRSALDRMKEAFDLLGEYVTSQGYVLRFAIEPKPNEPRGDILLPTVGHALAFIERLERPELYGVNPEVGHEQMAGLNFPHGIAQALWAGKLFHIDLNGQSGIKYDQDLRFGAGDLRSALWMVDLLESAGYEGPRHFDFKPPRTEDLDGVWASAAGCMRNYLILKERAAAFRADPEVQEALRASRLDQLAQPTAADGLEDLLADRAAFEDFDVEAAAARGMAFERLDQLAMDHLLGARG.

Catalysis depends on residues histidine 54 and aspartate 57. Positions 181, 217, 220, 245, 255, 257, and 287 each coordinate Mg(2+).

Belongs to the xylose isomerase family. In terms of assembly, homotetramer. It depends on Mg(2+) as a cofactor.

Its subcellular location is the cytoplasm. The catalysed reaction is alpha-D-xylose = alpha-D-xylulofuranose. The protein is Xylose isomerase of Streptomyces olivaceoviridis (Streptomyces corchorusii).